The chain runs to 83 residues: Cytochrome b559 subunit alpha (83 aa).

The chain crosses the membrane as a helical span at residues 21–35 (VIHSITIPSLFVAGW). His23 is a binding site for heme.

The protein belongs to the PsbE/PsbF family. Heterodimer of an alpha subunit and a beta subunit. PSII is composed of 1 copy each of membrane proteins PsbA, PsbB, PsbC, PsbD, PsbE, PsbF, PsbH, PsbI, PsbJ, PsbK, PsbL, PsbM, PsbT, PsbX, PsbY, PsbZ, Psb30/Ycf12, at least 3 peripheral proteins of the oxygen-evolving complex and a large number of cofactors. It forms dimeric complexes. Heme b is required as a cofactor.

Its subcellular location is the plastid. It is found in the chloroplast thylakoid membrane. In terms of biological role, this b-type cytochrome is tightly associated with the reaction center of photosystem II (PSII). PSII is a light-driven water:plastoquinone oxidoreductase that uses light energy to abstract electrons from H(2)O, generating O(2) and a proton gradient subsequently used for ATP formation. It consists of a core antenna complex that captures photons, and an electron transfer chain that converts photonic excitation into a charge separation. This Nephroselmis olivacea (Green alga) protein is Cytochrome b559 subunit alpha.